Consider the following 652-residue polypeptide: DNA ligase (652 aa).

NAD(+)-binding positions include 29-33 (DAEYD), 78-79 (SL), and Glu107. Catalysis depends on Lys109, which acts as the N6-AMP-lysine intermediate. NAD(+) is bound by residues Arg130, Glu164, Lys278, and Lys302. Positions 395, 398, 413, and 418 each coordinate Zn(2+). A BRCT domain is found at 577–652 (TDDAILSGKT…VKDEAWLLDL (76 aa)).

This sequence belongs to the NAD-dependent DNA ligase family. LigA subfamily. It depends on Mg(2+) as a cofactor. Requires Mn(2+) as cofactor.

It catalyses the reaction NAD(+) + (deoxyribonucleotide)n-3'-hydroxyl + 5'-phospho-(deoxyribonucleotide)m = (deoxyribonucleotide)n+m + AMP + beta-nicotinamide D-nucleotide.. Functionally, DNA ligase that catalyzes the formation of phosphodiester linkages between 5'-phosphoryl and 3'-hydroxyl groups in double-stranded DNA using NAD as a coenzyme and as the energy source for the reaction. It is essential for DNA replication and repair of damaged DNA. This Streptococcus thermophilus (strain ATCC BAA-491 / LMD-9) protein is DNA ligase.